The following is a 613-amino-acid chain: Proton myo-inositol cotransporter hmit-1.2 (613 aa).

Residues 1–21 (MVAVEFKVSESGRPRPEKNPK) are Cytoplasmic-facing. Residues 22–42 (LGFFVYLLGSAAIIGGFLFGY) traverse the membrane as a helical segment. Topologically, residues 43–69 (DTSVVSAAMLYVPEAPGLKPMGTVWKE) are extracellular. The chain crosses the membrane as a helical span at residues 70 to 90 (VIVSITPGMAAVGAWFSGAGS). The Cytoplasmic segment spans residues 91 to 96 (DRYGRK). Residues 97–117 (PIIIGSTLIFVCGAVICAVAW) form a helical membrane-spanning segment. Topologically, residues 118–119 (TK) are extracellular. Residues 120–140 (IVMLIGRIFLGVGIGFASMVV) traverse the membrane as a helical segment. Residues 141–157 (PVYLGEASPTHVRGTLV) are Cytoplasmic-facing. A helical membrane pass occupies residues 158–178 (SAFAMMISFGQVVANIMGGVF). Residues 179-189 (SYWEPYTIGWR) lie on the Extracellular side of the membrane. The helical transmembrane segment at 190–210 (LMFAFAGIPALIQFVCFIFLP) threads the bilayer. At 211–279 (ETPRWLYENG…RILKTPHVLK (69 aa)) the chain is on the cytoplasmic side. Residues 280-300 (ACFIGSMLQAFQQLAGINTIL) traverse the membrane as a helical segment. At 301–317 (YYTADIIRSAGIENYHT) the chain is on the extracellular side. The chain crosses the membrane as a helical span at residues 318–338 (IIWISVILSICNLIGPFAPMF). The Cytoplasmic segment spans residues 339–347 (FIEKLGRRK). Residues 348–368 (LFLFSCAGVVVSLVLIGVSFL) form a helical membrane-spanning segment. Over 369–472 (LVGNDSAPNF…QKHHCTTSYT (104 aa)) the chain is Extracellular. 3 N-linked (GlcNAc...) asparagine glycosylation sites follow: Asn372, Asn451, and Asn456. The chain crosses the membrane as a helical span at residues 473–493 (ILPIVMMGVYLLTFSCGFTSL). The Cytoplasmic portion of the chain corresponds to 494-515 (PWVLNSEFYPMWARSTCVSIST). A helical transmembrane segment spans residues 516 to 536 (LSNWVFNLIIALTYLSLTHAI). The Extracellular segment spans residues 537-539 (TKY). A helical transmembrane segment spans residues 540–560 (GAFWLYAIFTIIAFIFIYFLV). The Cytoplasmic portion of the chain corresponds to 561–613 (PETTGYSIDEVEMLFMNKRQRNIAMQARQAKLDAASDKDKNSSTSLSTETITM). The disordered stretch occupies residues 594–613 (AASDKDKNSSTSLSTETITM). Positions 602–613 (SSTSLSTETITM) are enriched in polar residues.

It belongs to the major facilitator superfamily. Sugar transporter (TC 2.A.1.1) family. In terms of tissue distribution, expressed in the excretory canal cell and in pairs of amphid and sheath glia.

Its subcellular location is the cell membrane. It localises to the perikaryon. The enzyme catalyses myo-inositol(out) + H(+)(out) = myo-inositol(in) + H(+)(in). Functionally, h(+)-myo-inositol cotransporter. Probably by promoting the transport of myo-inositol regulates intracellular osmosis in response to hyperosmotic stress. This Caenorhabditis elegans protein is Proton myo-inositol cotransporter hmit-1.2.